The chain runs to 502 residues: Glycerol kinase (502 aa).

T14 contacts ADP. ATP is bound by residues T14, T15, and S16. Position 14 (T14) interacts with sn-glycerol 3-phosphate. R18 is an ADP binding site. Sn-glycerol 3-phosphate is bound by residues R84, E85, Y136, and D246. 5 residues coordinate glycerol: R84, E85, Y136, D246, and Q247. T268 and G311 together coordinate ADP. Residues T268, G311, Q315, and G412 each contribute to the ATP site. Residues G412 and N416 each coordinate ADP.

The protein belongs to the FGGY kinase family. In terms of assembly, homotetramer and homodimer (in equilibrium). Heterodimer with EIIA-Glc. Binds 1 zinc ion per glycerol kinase EIIA-Glc dimer. The zinc ion is important for dimerization.

It catalyses the reaction glycerol + ATP = sn-glycerol 3-phosphate + ADP + H(+). It participates in polyol metabolism; glycerol degradation via glycerol kinase pathway; sn-glycerol 3-phosphate from glycerol: step 1/1. Activity of this regulatory enzyme is affected by several metabolites. Allosterically and non-competitively inhibited by fructose 1,6-bisphosphate (FBP) and unphosphorylated phosphocarrier protein EIIA-Glc (III-Glc), an integral component of the bacterial phosphotransferase (PTS) system. Key enzyme in the regulation of glycerol uptake and metabolism. Catalyzes the phosphorylation of glycerol to yield sn-glycerol 3-phosphate. This Shigella boydii serotype 18 (strain CDC 3083-94 / BS512) protein is Glycerol kinase.